The chain runs to 562 residues: MDYKKKVAAALAPALNEYLTDTEIYEKIEIPKESKMGDYAFPTFTLAKVLRKAPQMIASELVEKIDQDQFEKVEVAGPYINFFLDKTAFGAEVLGTVLSQKAEYGQNDDGNQGNVPIDMSSPNIAKPISMGHLRSTVIGNSLSLIMSKNGYNPIKINHLGDWGTQFGKLITAYKLWGSEEEVKADPINKLLEYYVRFHKEDQEKPELDDIARDWFKKLEDGDEEAMNLWQWFREESLKSFKQIYDKLGITFDSYKGEAFYNDKMDEIVQILEDKGLLKESQGAQVVDLEKYNLNPALIKKTDGATLYITRDLAAALYRYRTYDFNQSLYVVGAEQTNHFKQLKAVLKEMGFDWSDDVHHIPFGLITLNGKKLSTRSGRVVLLDEVLNDAVSLAKKQINDKNPDLANADTVAKEVGVGAVIFHDLKNERTNSFDFNLEDVVRFEGETGPYVQYSRARAESILRKAGDVEEFAQLNITDPKAWDTLKALQDFPNIVKRAAAQYEPSVIAKYALGLAKAFNKYYANSKILADDEEKTARLALVKSVSIVLEESLRLLGVKAPDEM.

Positions 122–132 (PNIAKPISMGH) match the 'HIGH' region motif.

Belongs to the class-I aminoacyl-tRNA synthetase family. As to quaternary structure, monomer.

Its subcellular location is the cytoplasm. The enzyme catalyses tRNA(Arg) + L-arginine + ATP = L-arginyl-tRNA(Arg) + AMP + diphosphate. The protein is Arginine--tRNA ligase of Pediococcus pentosaceus (strain ATCC 25745 / CCUG 21536 / LMG 10740 / 183-1w).